We begin with the raw amino-acid sequence, 47 residues long: MNRCLLLNLSHRSGEDSFPALCISALHTCRCYTHLGASQDSRAGYSY.

The polypeptide is Protein YqgG (Escherichia coli (strain K12)).